Reading from the N-terminus, the 330-residue chain is Beta-ketoacyl-[acyl-carrier-protein] synthase III (330 aa).

Active-site residues include Cys114 and His255. Residues 256 to 260 are ACP-binding; sequence QANQR. Asn285 is an active-site residue.

This sequence belongs to the thiolase-like superfamily. FabH family. As to quaternary structure, homodimer.

The protein resides in the cytoplasm. It carries out the reaction malonyl-[ACP] + acetyl-CoA + H(+) = 3-oxobutanoyl-[ACP] + CO2 + CoA. The protein operates within lipid metabolism; fatty acid biosynthesis. In terms of biological role, catalyzes the condensation reaction of fatty acid synthesis by the addition to an acyl acceptor of two carbons from malonyl-ACP. Catalyzes the first condensation reaction which initiates fatty acid synthesis and may therefore play a role in governing the total rate of fatty acid production. Possesses both acetoacetyl-ACP synthase and acetyl transacylase activities. Its substrate specificity determines the biosynthesis of branched-chain and/or straight-chain of fatty acids. The sequence is that of Beta-ketoacyl-[acyl-carrier-protein] synthase III from Nostoc sp. (strain PCC 7120 / SAG 25.82 / UTEX 2576).